Consider the following 557-residue polypeptide: Coiled-coil domain-containing protein 22 homolog (557 aa).

Coiled coils occupy residues 260-350 (RLGQ…LQSQ) and 489-554 (ELTA…AGRN).

Belongs to the CCDC22 family.

This chain is Coiled-coil domain-containing protein 22 homolog, found in Anopheles gambiae (African malaria mosquito).